We begin with the raw amino-acid sequence, 315 residues long: Ornithine carbamoyltransferase (315 aa).

Carbamoyl phosphate is bound by residues 53–56, Gln-80, Arg-104, and 131–134; these read STRT and HPCQ. L-ornithine-binding positions include Asn-163, Asp-227, and 231-232; that span reads SM. Residues 267–268 and Arg-295 contribute to the carbamoyl phosphate site; that span reads CL.

It belongs to the aspartate/ornithine carbamoyltransferase superfamily. OTCase family.

It is found in the cytoplasm. The enzyme catalyses carbamoyl phosphate + L-ornithine = L-citrulline + phosphate + H(+). It functions in the pathway amino-acid biosynthesis; L-arginine biosynthesis; L-arginine from L-ornithine and carbamoyl phosphate: step 1/3. Reversibly catalyzes the transfer of the carbamoyl group from carbamoyl phosphate (CP) to the N(epsilon) atom of ornithine (ORN) to produce L-citrulline. In Rhodococcus jostii (strain RHA1), this protein is Ornithine carbamoyltransferase.